The sequence spans 200 residues: Dephospho-CoA kinase (200 aa).

Residues 4–200 form the DPCK domain; sequence VIGLTGGIAS…VILKKWNIID (197 aa). Position 12–17 (12–17) interacts with ATP; sequence ASGKST.

This sequence belongs to the CoaE family.

The protein localises to the cytoplasm. The catalysed reaction is 3'-dephospho-CoA + ATP = ADP + CoA + H(+). It participates in cofactor biosynthesis; coenzyme A biosynthesis; CoA from (R)-pantothenate: step 5/5. Its function is as follows. Catalyzes the phosphorylation of the 3'-hydroxyl group of dephosphocoenzyme A to form coenzyme A. The chain is Dephospho-CoA kinase from Bacillus cereus (strain ATCC 14579 / DSM 31 / CCUG 7414 / JCM 2152 / NBRC 15305 / NCIMB 9373 / NCTC 2599 / NRRL B-3711).